An 88-amino-acid polypeptide reads, in one-letter code: Small ribosomal subunit protein bS18A (88 aa).

Belongs to the bacterial ribosomal protein bS18 family. As to quaternary structure, part of the 30S ribosomal subunit. Forms a tight heterodimer with protein bS6.

Functionally, binds as a heterodimer with protein bS6 to the central domain of the 16S rRNA, where it helps stabilize the platform of the 30S subunit. The protein is Small ribosomal subunit protein bS18A of Mycolicibacterium gilvum (strain PYR-GCK) (Mycobacterium gilvum (strain PYR-GCK)).